A 524-amino-acid chain; its full sequence is Probable pectinesterase/pectinesterase inhibitor 42 (524 aa).

A signal peptide spans 1–22 (MLVKVFSFFILMITMVVIGVSK). A pectinesterase inhibitor 42 region spans residues 23 to 172 (EYCDDKHSCQ…ISKAKVALAL (150 aa)). Residues 215-510 (DVVVAKDGTG…FTVAKLLDGE (296 aa)) are pectinesterase 42. N-linked (GlcNAc...) asparagine glycans are attached at residues N265 and N281. T290 is a binding site for substrate. D343 (proton donor; for pectinesterase activity) is an active-site residue. C357 and C377 are joined by a disulfide. The active-site Nucleophile; for pectinesterase activity is the D364. N412 carries N-linked (GlcNAc...) asparagine glycosylation. R430 and W432 together coordinate substrate.

In the N-terminal section; belongs to the PMEI family. This sequence in the C-terminal section; belongs to the pectinesterase family. Expressed in siliques but not in flower buds.

Its subcellular location is the secreted. It is found in the cell wall. The catalysed reaction is [(1-&gt;4)-alpha-D-galacturonosyl methyl ester](n) + n H2O = [(1-&gt;4)-alpha-D-galacturonosyl](n) + n methanol + n H(+). It participates in glycan metabolism; pectin degradation; 2-dehydro-3-deoxy-D-gluconate from pectin: step 1/5. Acts in the modification of cell walls via demethylesterification of cell wall pectin. This is Probable pectinesterase/pectinesterase inhibitor 42 (PME42) from Arabidopsis thaliana (Mouse-ear cress).